The following is a 170-amino-acid chain: MTRKQRRLTIIGGALFVLAVAAGLVLNALRDSIVFFSTPTMVAEKHIGPGKRFRLGGLVQPGSLKRGDDLAVTFEVADGGAKLPVAYKGILPDLFREGQGVVAEGALDAAGVFKADTVLAKHDETYMPKEVADTLKKQGHWKDDYGKPQAAKPGPVSMREGEKTAAGATQ.

The Cytoplasmic segment spans residues M1–R7. Residues L8–A28 form a helical; Signal-anchor for type II membrane protein membrane-spanning segment. Over L29–Q170 the chain is Periplasmic. H122 and Y126 together coordinate heme. Basic and acidic residues predominate over residues K137–G146. Residues K137–Q170 form a disordered region.

It belongs to the CcmE/CycJ family.

Its subcellular location is the cell inner membrane. Its function is as follows. Heme chaperone required for the biogenesis of c-type cytochromes. Transiently binds heme delivered by CcmC and transfers the heme to apo-cytochromes in a process facilitated by CcmF and CcmH. This is Cytochrome c-type biogenesis protein CcmE from Bradyrhizobium sp. (strain BTAi1 / ATCC BAA-1182).